A 122-amino-acid polypeptide reads, in one-letter code: MLALFIHTTGVLSKLLSEAVEAIEPGPVEGIRATGANKLEEILYGVLPQVMPLLISYSLYRFESNVRSATVVGMVGAGGIGVTLWEAIRGFQFQQTCALMVLIIVTVSLLDFLSQRLRKHFI.

Residues methionine 1–serine 114 form the ABC transmembrane type-1 domain. A run of 4 helical transmembrane segments spans residues alanine 3–isoleucine 23, leucine 39–leucine 59, serine 68–isoleucine 88, and phenylalanine 93–leucine 113.

This sequence belongs to the binding-protein-dependent transport system permease family. As to quaternary structure, if the reading frame is restored, the complex is composed of two ATP-binding proteins (PhnC), two transmembrane proteins (PhnE) and a solute-binding protein (PhnD).

It is found in the cell inner membrane. In terms of biological role, C-terminal fragment of the PhnE protein, part of a phosphonate usage operon that is cryptic in K12 strains. Growth of K12 strains on phosphonate can be observed when it is used as the sole phosphorus source after a 60 hour lag period, suggesting the operon is activated. An intact PhnE in strain B is (AC A0A140NFA3). Part of the binding-protein-dependent transport system for phosphonates; probably responsible for the translocation of the substrate across the membrane. The chain is Putative cryptic phosphonate transport system permease protein PhnE2 (phnE) from Escherichia coli (strain K12).